Reading from the N-terminus, the 159-residue chain is 6,7-dimethyl-8-ribityllumazine synthase (159 aa).

5-amino-6-(D-ribitylamino)uracil is bound by residues Tyr23, 58–60, and 82–84; these read AYE and TII. Catalysis depends on His90, which acts as the Proton donor. Ile115 contacts 5-amino-6-(D-ribitylamino)uracil. Arg129 contributes to the (2S)-2-hydroxy-3-oxobutyl phosphate binding site.

It belongs to the DMRL synthase family. As to quaternary structure, forms an icosahedral capsid composed of 60 subunits, arranged as a dodecamer of pentamers.

The enzyme catalyses (2S)-2-hydroxy-3-oxobutyl phosphate + 5-amino-6-(D-ribitylamino)uracil = 6,7-dimethyl-8-(1-D-ribityl)lumazine + phosphate + 2 H2O + H(+). The protein operates within cofactor biosynthesis; riboflavin biosynthesis; riboflavin from 2-hydroxy-3-oxobutyl phosphate and 5-amino-6-(D-ribitylamino)uracil: step 1/2. In terms of biological role, catalyzes the formation of 6,7-dimethyl-8-ribityllumazine by condensation of 5-amino-6-(D-ribitylamino)uracil with 3,4-dihydroxy-2-butanone 4-phosphate. This is the penultimate step in the biosynthesis of riboflavin. The sequence is that of 6,7-dimethyl-8-ribityllumazine synthase from Buchnera aphidicola subsp. Baizongia pistaciae (strain Bp).